The chain runs to 482 residues: Kynurenine 3-monooxygenase (482 aa).

It belongs to the aromatic-ring hydroxylase family. KMO subfamily. It depends on FAD as a cofactor.

The protein localises to the mitochondrion outer membrane. It catalyses the reaction L-kynurenine + NADPH + O2 + H(+) = 3-hydroxy-L-kynurenine + NADP(+) + H2O. Its pathway is cofactor biosynthesis; NAD(+) biosynthesis; quinolinate from L-kynurenine: step 1/3. Catalyzes the hydroxylation of L-kynurenine (L-Kyn) to form 3-hydroxy-L-kynurenine (L-3OHKyn). Required for synthesis of quinolinic acid. This is Kynurenine 3-monooxygenase from Phaeosphaeria nodorum (strain SN15 / ATCC MYA-4574 / FGSC 10173) (Glume blotch fungus).